A 638-amino-acid chain; its full sequence is 3D-(3,5/4)-trihydroxycyclohexane-1,2-dione hydrolase (638 aa).

E67 provides a ligand contact to thiamine diphosphate. Residues 442–523 (SLPGDLQRLW…INIMLFDNSG (82 aa)) are thiamine pyrophosphate binding. Mg(2+)-binding residues include D494 and N521.

The protein belongs to the TPP enzyme family. Requires Mg(2+) as cofactor. Thiamine diphosphate is required as a cofactor.

It carries out the reaction 3D-3,5/4-trihydroxycyclohexane-1,2-dione + H2O = 5-deoxy-D-glucuronate + H(+). It participates in polyol metabolism; myo-inositol degradation into acetyl-CoA; acetyl-CoA from myo-inositol: step 3/7. In terms of biological role, involved in the cleavage of the C1-C2 bond of 3D-(3,5/4)-trihydroxycyclohexane-1,2-dione (THcHDO) to yield 5-deoxy-glucuronate (5DG). The chain is 3D-(3,5/4)-trihydroxycyclohexane-1,2-dione hydrolase from Listeria monocytogenes serotype 4b (strain F2365).